The primary structure comprises 272 residues: Cytochrome c oxidase subunit 3 (272 aa).

The next 7 helical transmembrane spans lie at 20 to 40 (PWPL…VLFM), 45 to 65 (GGGE…FTWW), 89 to 109 (GMIL…WAFF), 128 to 148 (VVAI…LSSG), 166 to 186 (AMQG…MQGF), 204 to 224 (FYMA…FLFI), and 248 to 268 (YWHF…WWGF).

This sequence belongs to the cytochrome c oxidase subunit 3 family. Component of the cytochrome c oxidase (complex IV, CIV), a multisubunit enzyme composed of a catalytic core of 3 subunits and several supernumerary subunits. The complex exists as a monomer or a dimer and forms supercomplexes (SCs) in the inner mitochondrial membrane with ubiquinol-cytochrome c oxidoreductase (cytochrome b-c1 complex, complex III, CIII).

It localises to the mitochondrion inner membrane. It catalyses the reaction 4 Fe(II)-[cytochrome c] + O2 + 8 H(+)(in) = 4 Fe(III)-[cytochrome c] + 2 H2O + 4 H(+)(out). Its function is as follows. Component of the cytochrome c oxidase, the last enzyme in the mitochondrial electron transport chain which drives oxidative phosphorylation. The respiratory chain contains 3 multisubunit complexes succinate dehydrogenase (complex II, CII), ubiquinol-cytochrome c oxidoreductase (cytochrome b-c1 complex, complex III, CIII) and cytochrome c oxidase (complex IV, CIV), that cooperate to transfer electrons derived from NADH and succinate to molecular oxygen, creating an electrochemical gradient over the inner membrane that drives transmembrane transport and the ATP synthase. Cytochrome c oxidase is the component of the respiratory chain that catalyzes the reduction of oxygen to water. Electrons originating from reduced cytochrome c in the intermembrane space (IMS) are transferred via the dinuclear copper A center (CU(A)) of subunit 2 and heme A of subunit 1 to the active site in subunit 1, a binuclear center (BNC) formed by heme A3 and copper B (CU(B)). The BNC reduces molecular oxygen to 2 water molecules using 4 electrons from cytochrome c in the IMS and 4 protons from the mitochondrial matrix. The chain is Cytochrome c oxidase subunit 3 (COX3) from Pylaiella littoralis (Seaweed).